The primary structure comprises 184 residues: Major fimbrial subunit (184 aa).

A signal peptide spans 1–22 (MKLSKIALAAALVFGINSVATA). Cysteine 49 and cysteine 88 form a disulfide bridge.

Belongs to the fimbrial protein family.

It localises to the fimbrium. In terms of biological role, major structural component of PMF fimbriae. This chain is Major fimbrial subunit (pmfA), found in Proteus mirabilis (strain HI4320).